The primary structure comprises 215 residues: Ribonuclease T (215 aa).

The Exonuclease domain maps to 20-194; it reads VVIDVETAGF…YDTLQTAKLF (175 aa). The Mg(2+) site is built by aspartate 23, glutamate 25, histidine 181, and aspartate 186. The active-site Proton donor/acceptor is the histidine 181.

The protein belongs to the RNase T family. In terms of assembly, homodimer. Mg(2+) serves as cofactor.

Its function is as follows. Trims short 3' overhangs of a variety of RNA species, leaving a one or two nucleotide 3' overhang. Responsible for the end-turnover of tRNA: specifically removes the terminal AMP residue from uncharged tRNA (tRNA-C-C-A). Also appears to be involved in tRNA biosynthesis. The polypeptide is Ribonuclease T (Yersinia pseudotuberculosis serotype O:1b (strain IP 31758)).